The chain runs to 123 residues: Ribosome-binding factor A (123 aa).

This sequence belongs to the RbfA family. In terms of assembly, monomer. Binds 30S ribosomal subunits, but not 50S ribosomal subunits or 70S ribosomes.

Its subcellular location is the cytoplasm. Functionally, one of several proteins that assist in the late maturation steps of the functional core of the 30S ribosomal subunit. Associates with free 30S ribosomal subunits (but not with 30S subunits that are part of 70S ribosomes or polysomes). Required for efficient processing of 16S rRNA. May interact with the 5'-terminal helix region of 16S rRNA. The chain is Ribosome-binding factor A from Chlorobium chlorochromatii (strain CaD3).